Reading from the N-terminus, the 350-residue chain is Probable dual-specificity RNA methyltransferase RlmN (350 aa).

The active-site Proton acceptor is Glu-91. Positions 97–327 (YHHGNSVCIS…VTIRREMGRD (231 aa)) constitute a Radical SAM core domain. An intrachain disulfide couples Cys-104 to Cys-332. [4Fe-4S] cluster is bound by residues Cys-111, Cys-115, and Cys-118. S-adenosyl-L-methionine is bound by residues 158 to 159 (GE), Ser-190, 213 to 215 (SLH), and Asn-289. Residue Cys-332 is the S-methylcysteine intermediate of the active site.

The protein belongs to the radical SAM superfamily. RlmN family. [4Fe-4S] cluster is required as a cofactor.

It is found in the cytoplasm. It carries out the reaction adenosine(2503) in 23S rRNA + 2 reduced [2Fe-2S]-[ferredoxin] + 2 S-adenosyl-L-methionine = 2-methyladenosine(2503) in 23S rRNA + 5'-deoxyadenosine + L-methionine + 2 oxidized [2Fe-2S]-[ferredoxin] + S-adenosyl-L-homocysteine. The catalysed reaction is adenosine(37) in tRNA + 2 reduced [2Fe-2S]-[ferredoxin] + 2 S-adenosyl-L-methionine = 2-methyladenosine(37) in tRNA + 5'-deoxyadenosine + L-methionine + 2 oxidized [2Fe-2S]-[ferredoxin] + S-adenosyl-L-homocysteine. Specifically methylates position 2 of adenine 2503 in 23S rRNA and position 2 of adenine 37 in tRNAs. This Lachnospira eligens (strain ATCC 27750 / DSM 3376 / VPI C15-48 / C15-B4) (Eubacterium eligens) protein is Probable dual-specificity RNA methyltransferase RlmN.